Here is a 538-residue protein sequence, read N- to C-terminus: Cytochrome P450 monooxygenase astC (538 aa).

Residues 18–38 form a helical membrane-spanning segment; that stretch reads ALMLPALVGCALLIYRAFFAI. C481 contacts heme.

This sequence belongs to the cytochrome P450 family. The cofactor is heme.

It is found in the membrane. The protein operates within secondary metabolite biosynthesis; terpenoid biosynthesis. Its function is as follows. Cytochrome P450 monooxygenase; part of the gene cluster that mediates the biosynthesis of the sesquiterpenoid aspterric acid (AA), an inhibitor of dihydroxy-acid dehydratase (DHAD) effective as an herbicide. AstC catalyzes the third and last step within the pathway and converts the alpha-epoxy carboxylate intermediate produced by the cytochrome P450 monooxygenase astC from (-)daucane into the tricyclic aspterric acid. The protein is Cytochrome P450 monooxygenase astC of Aspergillus terreus (strain NIH 2624 / FGSC A1156).